A 154-amino-acid chain; its full sequence is MKRSGILNQPLSNILASFGHTDLLVVCDAGFPIPRDAQRVDLAIAPDLPDLRTVLSLINEEFITEKVVIAEEMAEFNPPLHGWLQKHFSGVEFERRPHEEMLTQVATSAKAIVRTGAFDPWGNIGLVSGVDVERFFAKEGTVLPDYYRDRAGEA.

The Proton donor role is filled by H20. Residues D28, H98, and 121 to 123 (WGN) contribute to the substrate site.

It belongs to the RbsD / FucU family. RbsD subfamily. As to quaternary structure, homodecamer.

Its subcellular location is the cytoplasm. The catalysed reaction is beta-D-ribopyranose = beta-D-ribofuranose. It functions in the pathway carbohydrate metabolism; D-ribose degradation; D-ribose 5-phosphate from beta-D-ribopyranose: step 1/2. Its function is as follows. Catalyzes the interconversion of beta-pyran and beta-furan forms of D-ribose. This Rubrobacter xylanophilus (strain DSM 9941 / JCM 11954 / NBRC 16129 / PRD-1) protein is D-ribose pyranase 2.